A 500-amino-acid chain; its full sequence is Probable 26S proteasome non-ATPase regulatory subunit 3 (500 aa).

One can recognise a PCI domain in the interval 253–432 (ARFLYYLGRI…GYMRTKESTD (180 aa)). Residues 462-484 (RYPPKSYGKELESAEERREREQQ) are disordered. Basic and acidic residues predominate over residues 468–484 (YGKELESAEERREREQQ).

The protein belongs to the proteasome subunit S3 family. As to quaternary structure, the 26S proteasome is composed of a core protease, known as the 20S proteasome, capped at one or both ends by the 19S regulatory complex (RC). The RC is composed of at least 18 different subunits in two subcomplexes, the base and the lid, which form the portions proximal and distal to the 20S proteolytic core, respectively.

Functionally, acts as a regulatory subunit of the 26 proteasome which is involved in the ATP-dependent degradation of ubiquitinated proteins. This is Probable 26S proteasome non-ATPase regulatory subunit 3 (DOXA2) from Anopheles stephensi (Indo-Pakistan malaria mosquito).